The sequence spans 370 residues: Peptide chain release factor 2 (370 aa).

Glutamine 249 is subject to N5-methylglutamine.

Belongs to the prokaryotic/mitochondrial release factor family. Post-translationally, methylated by PrmC. Methylation increases the termination efficiency of RF2.

The protein resides in the cytoplasm. Functionally, peptide chain release factor 2 directs the termination of translation in response to the peptide chain termination codons UGA and UAA. This Kosmotoga olearia (strain ATCC BAA-1733 / DSM 21960 / TBF 19.5.1) protein is Peptide chain release factor 2.